The following is a 202-amino-acid chain: Probable GTP-binding protein EngB (202 aa).

The EngB-type G domain occupies 26–200; the sequence is VSKEIAFTGS…KAQLDSWFSI (175 aa). Residues 34–41, 61–65, 79–82, 146–149, and 179–181 contribute to the GTP site; these read GSSNVGKS, GSTKT, DLPG, NKAD, and FSS. Mg(2+)-binding residues include Ser-41 and Thr-63.

It belongs to the TRAFAC class TrmE-Era-EngA-EngB-Septin-like GTPase superfamily. EngB GTPase family. Requires Mg(2+) as cofactor.

Functionally, necessary for normal cell division and for the maintenance of normal septation. The protein is Probable GTP-binding protein EngB of Baumannia cicadellinicola subsp. Homalodisca coagulata.